The sequence spans 127 residues: Protein ApaG (127 aa).

The ApaG domain occupies 3-127 (EGKKYQINIS…FTLAMPRVLH (125 aa)).

The sequence is that of Protein ApaG from Thiobacillus denitrificans (strain ATCC 25259 / T1).